A 507-amino-acid polypeptide reads, in one-letter code: 2,3-bisphosphoglycerate-independent phosphoglycerate mutase (507 aa).

Residues aspartate 11 and serine 61 each contribute to the Mn(2+) site. Serine 61 serves as the catalytic Phosphoserine intermediate. Residues histidine 122, 150–151, arginine 182, arginine 188, 257–260, and lysine 332 contribute to the substrate site; these read RD and RPDR. Residues aspartate 397, histidine 401, aspartate 438, histidine 439, and histidine 456 each contribute to the Mn(2+) site.

This sequence belongs to the BPG-independent phosphoglycerate mutase family. In terms of assembly, monomer. It depends on Mn(2+) as a cofactor.

It carries out the reaction (2R)-2-phosphoglycerate = (2R)-3-phosphoglycerate. The protein operates within carbohydrate degradation; glycolysis; pyruvate from D-glyceraldehyde 3-phosphate: step 3/5. Functionally, catalyzes the interconversion of 2-phosphoglycerate and 3-phosphoglycerate. This Mycoplasma genitalium (strain ATCC 33530 / DSM 19775 / NCTC 10195 / G37) (Mycoplasmoides genitalium) protein is 2,3-bisphosphoglycerate-independent phosphoglycerate mutase.